Reading from the N-terminus, the 872-residue chain is Protein SEY1 (872 aa).

Residues 1–749 (MVANGHFAGV…KRSAIGGITQ (749 aa)) lie on the Cytoplasmic side of the membrane. Residues 49–307 (GFNYHLISVF…IPADGFAVYA (259 aa)) enclose the GB1/RHD3-type G domain. GTP is bound at residue 59–66 (GSQSTGKS). Residues 482–504 (SNYQQELSLYQKDLENIGGQLRR) adopt a coiled-coil conformation. The tract at residues 676–704 (LDKWIGHTPSSATPADEEDLTPIGGVDED) is disordered. Acidic residues predominate over residues 690–704 (ADEEDLTPIGGVDED). A helical membrane pass occupies residues 750–770 (VPLYFYGLLLALGWNEIVAVL). Topologically, residues 771 to 773 (RNP) are lumenal. Residues 774–794 (AYFLLLFVCAVTAYVTYQLNL) form a helical membrane-spanning segment. At 795–872 (WGPIIKMTEA…IDDADDDDDF (78 aa)) the chain is on the cytoplasmic side. The interval 849-872 (NRKSAGGFQNNRSHIDDADDDDDF) is disordered.

The protein belongs to the TRAFAC class dynamin-like GTPase superfamily. GB1/RHD3 GTPase family. RHD3 subfamily.

It localises to the endoplasmic reticulum membrane. In terms of biological role, cooperates with the reticulon proteins and tubule-shaping DP1 family proteins to generate and maintain the structure of the tubular endoplasmic reticulum network. Has GTPase activity, which is required for its function in ER organization. This is Protein SEY1 from Paracoccidioides brasiliensis (strain Pb18).